Here is a 136-residue protein sequence, read N- to C-terminus: Small ribosomal subunit protein uS8c (136 aa).

This sequence belongs to the universal ribosomal protein uS8 family. As to quaternary structure, part of the 30S ribosomal subunit.

It is found in the plastid. The protein resides in the chloroplast. In terms of biological role, one of the primary rRNA binding proteins, it binds directly to 16S rRNA central domain where it helps coordinate assembly of the platform of the 30S subunit. The polypeptide is Small ribosomal subunit protein uS8c (rps8) (Agrostis stolonifera (Creeping bentgrass)).